The following is a 231-amino-acid chain: ATP-dependent dethiobiotin synthetase BioD (231 aa).

12–17 (EVGKTV) contributes to the ATP binding site. A Mg(2+)-binding site is contributed by threonine 16. Residue lysine 37 is part of the active site. A substrate-binding site is contributed by serine 41. ATP is bound by residues aspartate 51, 112-115 (EGAG), and 202-204 (PKL). Positions 51 and 112 each coordinate Mg(2+).

This sequence belongs to the dethiobiotin synthetase family. As to quaternary structure, homodimer. The cofactor is Mg(2+).

It localises to the cytoplasm. The catalysed reaction is (7R,8S)-7,8-diammoniononanoate + CO2 + ATP = (4R,5S)-dethiobiotin + ADP + phosphate + 3 H(+). Its pathway is cofactor biosynthesis; biotin biosynthesis; biotin from 7,8-diaminononanoate: step 1/2. Functionally, catalyzes a mechanistically unusual reaction, the ATP-dependent insertion of CO2 between the N7 and N8 nitrogen atoms of 7,8-diaminopelargonic acid (DAPA, also called 7,8-diammoniononanoate) to form a ureido ring. The polypeptide is ATP-dependent dethiobiotin synthetase BioD (Bacillus subtilis (strain 168)).